A 154-amino-acid chain; its full sequence is MPVDPEKLAKLQKASVAKKVGGSRVKAKKNVKTEQDDTKLIEALGKLKAQKIEGIEEANFFKEDGKVLHFNRVGVQGAAQHNTFALTGYPQEKDVTQLIPQILPQLGAENLEILRKLAEQIQAGKNPELNAGGAEGAEEDIPDLIEGQKFDDVE.

The 66-residue stretch at 34-99 (EQDDTKLIEA…PQEKDVTQLI (66 aa)) folds into the NAC-A/B domain. A disordered region spans residues 125-154 (KNPELNAGGAEGAEEDIPDLIEGQKFDDVE).

This sequence belongs to the NAC-beta family. In terms of assembly, part of the nascent polypeptide-associated complex (NAC), consisting of EGD2 and EGD1. NAC associates with ribosomes via EGD1.

The protein resides in the cytoplasm. The protein localises to the nucleus. Its function is as follows. Component of the nascent polypeptide-associated complex (NAC), a dynamic component of the ribosomal exit tunnel, protecting the emerging polypeptides from interaction with other cytoplasmic proteins to ensure appropriate nascent protein targeting. The NAC complex also promotes mitochondrial protein import by enhancing productive ribosome interactions with the outer mitochondrial membrane and blocks the inappropriate interaction of ribosomes translating non-secretory nascent polypeptides with translocation sites in the membrane of the endoplasmic reticulum. EGD1 may act as a transcription factor that exert a negative effect on the expression of several genes that are transcribed by RNA polymerase II. The protein is Nascent polypeptide-associated complex subunit beta (EGD1) of Debaryomyces hansenii (strain ATCC 36239 / CBS 767 / BCRC 21394 / JCM 1990 / NBRC 0083 / IGC 2968) (Yeast).